Consider the following 292-residue polypeptide: ATP synthase gamma chain (292 aa).

Belongs to the ATPase gamma chain family. In terms of assembly, F-type ATPases have 2 components, CF(1) - the catalytic core - and CF(0) - the membrane proton channel. CF(1) has five subunits: alpha(3), beta(3), gamma(1), delta(1), epsilon(1). CF(0) has three main subunits: a, b and c.

The protein localises to the cell inner membrane. Functionally, produces ATP from ADP in the presence of a proton gradient across the membrane. The gamma chain is believed to be important in regulating ATPase activity and the flow of protons through the CF(0) complex. This chain is ATP synthase gamma chain, found in Brucella canis (strain ATCC 23365 / NCTC 10854 / RM-666).